A 985-amino-acid polypeptide reads, in one-letter code: Guanine nucleotide exchange protein smcr8b (985 aa).

One can recognise a uDENN FLCN/SMCR8-type domain in the interval 47 to 225 (ISSAKLKKDF…VKCSSEREPI (179 aa)). Residues 242 to 292 (NEKSSHTDEISPQEKDGCGNSRKVEVKLENENRSHFEHEQYGKQRKDKPDK) are compositionally biased toward basic and acidic residues. 3 disordered regions span residues 242-301 (NEKS…PLAN), 502-528 (QSQV…SPAE), and 639-659 (EESP…EDNN). The cDENN FLCN/SMCR8-type domain occupies 390-895 (RLKTLEELCD…LINLLVEPKS (506 aa)). Residues 502-514 (QSQVQHSTLNTPS) are compositionally biased toward polar residues. One can recognise a dDENN FLCN/SMCR8-type domain in the interval 904–962 (FTFAQSVQSKLVTKAFLLTFSHGHPSPSRPQGSSGTECFLSELHTDDKKILRYLSELIK).

It belongs to the SMCR8 family. In terms of assembly, component of the C9orf72-SMCR8 complex. The C9orf72-SMCR8 complex associates with the ATG1/ULK1 kinase complex.

The protein resides in the cytoplasm. The protein localises to the nucleus. In terms of biological role, component of the C9orf72-SMCR8 complex, a complex that has guanine nucleotide exchange factor (GEF) activity and regulates autophagy. In the complex, C9orf72 and SMCR8 probably constitute the catalytic subunits that promote the exchange of GDP to GTP, converting inactive GDP-bound RAB8A and RAB39B into their active GTP-bound form, thereby promoting autophagosome maturation. The C9orf72-SMCR8 complex also acts as a negative regulator of autophagy initiation by interacting with the ATG1/ULK1 kinase complex and inhibiting its protein kinase activity. The protein is Guanine nucleotide exchange protein smcr8b (smcr8b) of Danio rerio (Zebrafish).